The following is a 204-amino-acid chain: Putative 3-methyladenine DNA glycosylase (204 aa).

Belongs to the DNA glycosylase MPG family.

The protein is Putative 3-methyladenine DNA glycosylase of Mycobacterium sp. (strain KMS).